We begin with the raw amino-acid sequence, 421 residues long: Serine/threonine-protein kinase OXI1 (421 aa).

Residues 17 to 329 form the Protein kinase domain; it reads LEVLSLLGRG…VEEIKGHDFF (313 aa). Residues 23-31 and K45 each bind ATP; that span reads LGRGAKGVV. The active-site Proton acceptor is D149. The segment at 167 to 246 is activation loop; sequence DFDLSTNLAP…VGTEEYVAPE (80 aa). S235 carries the phosphoserine; by PDPK1 modification. Positions 330–421 constitute an AGC-kinase C-terminal domain; the sequence is RGVDWEKVIL…LESDNNFLVF (92 aa). The short motif at 418–421 is the PIF element; sequence FLVF.

This sequence belongs to the protein kinase superfamily. AGC Ser/Thr protein kinase family. Interacts with PDK1 and PDK2. As to expression, expressed in roots and root hair cells.

It catalyses the reaction L-seryl-[protein] + ATP = O-phospho-L-seryl-[protein] + ADP + H(+). The enzyme catalyses L-threonyl-[protein] + ATP = O-phospho-L-threonyl-[protein] + ADP + H(+). Its activity is regulated as follows. Activated in response to hydrogen peroxide and cellulase elicitor. Activated by PDK1 in a phosphatidic acid dependent manner. Functionally, involved in oxidative burst-mediated signaling. Required for basal resistance to P.parasitica infection and root hair growth. Partly required for the activation of MPK3 and MPK6 by hydrogen peroxide and cellulase elicitor. The sequence is that of Serine/threonine-protein kinase OXI1 from Arabidopsis thaliana (Mouse-ear cress).